A 419-amino-acid chain; its full sequence is eIF5-mimic protein 2 (419 aa).

Met-1 is subject to N-acetylmethionine. Residues 1 to 15 (MNNQKQQKPTLSGQR) are compositionally biased toward polar residues. Positions 1–26 (MNNQKQQKPTLSGQRFKTRKRDEKER) are disordered. Ser-12 carries the post-translational modification Phosphoserine. The W2 domain maps to 247–414 (NQQTIGARKE…KNAEEESESE (168 aa)). Residue Lys-368 forms a Glycyl lysine isopeptide (Lys-Gly) (interchain with G-Cter in SUMO2) linkage. Residues Ser-411 and Ser-413 each carry the phosphoserine modification.

This sequence belongs to the BZW family.

Translation initiation regulator which represses repeat-associated non-AUG (RAN) initiated translation probably by acting as a competitive inhibitor of eukaryotic translation initiation factor 5 (EIF5) function. Enhances histone H4 gene transcription but does not seem to bind DNA directly. This Homo sapiens (Human) protein is eIF5-mimic protein 2 (BZW1).